The following is a 140-amino-acid chain: uncharacterized protein (140 aa).

Belongs to the MG067/MG068/MG395 family.

This is an uncharacterized protein from Mycoplasma pneumoniae (strain ATCC 29342 / M129 / Subtype 1) (Mycoplasmoides pneumoniae).